Here is a 940-residue protein sequence, read N- to C-terminus: UvrABC system protein A (940 aa).

31–38 (GLSGSGKS) contributes to the ATP binding site. The C4-type zinc-finger motif lies at 253 to 280 (CPICGYSMRELEPRLFSFNNPAGACPTC). 2 consecutive ABC transporter domains span residues 310–587 (WDRR…PESL) and 607–937 (ANPE…RFLK). 640–647 (GVSGSGKS) contributes to the ATP binding site. A C4-type zinc finger spans residues 740–766 (CEACQGDGVIKVEMHFLPDIYVPCDQC).

The protein belongs to the ABC transporter superfamily. UvrA family. In terms of assembly, forms a heterotetramer with UvrB during the search for lesions. Interacts with TRCF (Mfd). UvrB and TRCF binding to UvrA could be mutually exclusive.

Its subcellular location is the cytoplasm. Functionally, the UvrABC repair system catalyzes the recognition and processing of DNA lesions. UvrA is an ATPase and a DNA-binding protein. A damage recognition complex composed of 2 UvrA and 2 UvrB subunits scans DNA for abnormalities. When the presence of a lesion has been verified by UvrB, the UvrA molecules dissociate. The protein is UvrABC system protein A of Escherichia coli (strain K12).